The primary structure comprises 130 residues: Small ribosomal subunit protein uS9 (130 aa).

This sequence belongs to the universal ribosomal protein uS9 family.

This chain is Small ribosomal subunit protein uS9, found in Streptococcus pyogenes serotype M1.